The sequence spans 93 residues: Acylphosphatase (93 aa).

One can recognise an Acylphosphatase-like domain in the interval 4 to 91 (TLHLVIHGRV…PAGTGFRVAA (88 aa)). Catalysis depends on residues arginine 19 and asparagine 37.

It belongs to the acylphosphatase family.

The enzyme catalyses an acyl phosphate + H2O = a carboxylate + phosphate + H(+). This Azorhizobium caulinodans (strain ATCC 43989 / DSM 5975 / JCM 20966 / LMG 6465 / NBRC 14845 / NCIMB 13405 / ORS 571) protein is Acylphosphatase (acyP).